The sequence spans 481 residues: Protein nucleotidyltransferase YdiU (481 aa).

G85, G87, R88, K108, D120, G121, R172, and R179 together coordinate ATP. The Proton acceptor role is filled by D248. Mg(2+)-binding residues include N249 and D258. D258 contributes to the ATP binding site.

This sequence belongs to the SELO family. Mg(2+) serves as cofactor. The cofactor is Mn(2+).

The catalysed reaction is L-seryl-[protein] + ATP = 3-O-(5'-adenylyl)-L-seryl-[protein] + diphosphate. It carries out the reaction L-threonyl-[protein] + ATP = 3-O-(5'-adenylyl)-L-threonyl-[protein] + diphosphate. It catalyses the reaction L-tyrosyl-[protein] + ATP = O-(5'-adenylyl)-L-tyrosyl-[protein] + diphosphate. The enzyme catalyses L-histidyl-[protein] + UTP = N(tele)-(5'-uridylyl)-L-histidyl-[protein] + diphosphate. The catalysed reaction is L-seryl-[protein] + UTP = O-(5'-uridylyl)-L-seryl-[protein] + diphosphate. It carries out the reaction L-tyrosyl-[protein] + UTP = O-(5'-uridylyl)-L-tyrosyl-[protein] + diphosphate. In terms of biological role, nucleotidyltransferase involved in the post-translational modification of proteins. It can catalyze the addition of adenosine monophosphate (AMP) or uridine monophosphate (UMP) to a protein, resulting in modifications known as AMPylation and UMPylation. The chain is Protein nucleotidyltransferase YdiU from Cereibacter sphaeroides (strain ATCC 17025 / ATH 2.4.3) (Rhodobacter sphaeroides).